A 167-amino-acid polypeptide reads, in one-letter code: Histone H2A.Z-specific chaperone CHZ1 (167 aa).

Disordered regions lie at residues 1–116 (MSDE…IITT) and 131–167 (AEELDKERGVVAEEDEEEEEEEEKENEDDDFKEQVQN). Basic and acidic residues-rich tracts occupy residues 16-44 (KPQEEQDTEKESLTNSEESKKRAVEPSTD) and 60-75 (ELEKEEAKEKNAKTEN). Residues 76–110 (NEEGDDDEDDEDDDYEQGKLEDEEEEEDELLEIDE) show a composition bias toward acidic residues. The segment covering 131 to 141 (AEELDKERGVV) has biased composition (basic and acidic residues). Over residues 142–161 (AEEDEEEEEEEEKENEDDDF) the composition is skewed to acidic residues.

Belongs to the CHZ1 family. Forms a heterotrimer with H2A.Z-H2B, stabilizing the association of the histone dimer. Also, with a lower affinity, forms a heterotrimer with H2A-H2B.

It localises to the nucleus. In terms of biological role, forms a chaperone-bound H2A.Z-H2B complex that acts as a source for SWR1 complex-dependent H2A to H2A.Z histone replacement in chromatin. The protein is Histone H2A.Z-specific chaperone CHZ1 (CHZ1) of Candida albicans (strain SC5314 / ATCC MYA-2876) (Yeast).